Here is a 143-residue protein sequence, read N- to C-terminus: MDMLRSACFYFLLIVFVILSWSLLCDSRHLGHMEKKLSVNLDLLNKDNEEITKLEAPSTNKTNTLLSQSHAVVNHGDNGQINGKKTKEIHRVKRASDKKVSSKRVSRTWKIPKYPKKQPKSDQEHPGFNLDYMQPTTHPPHHN.

An N-terminal signal peptide occupies residues 1-27 (MDMLRSACFYFLLIVFVILSWSLLCDS). A propeptide spanning residues 28-130 (RHLGHMEKKL…SDQEHPGFNL (103 aa)) is cleaved from the precursor. An N-linked (GlcNAc...) asparagine glycan is attached at asparagine 60. Residues 74-83 (NHGDNGQING) show a composition bias toward polar residues. The interval 74–143 (NHGDNGQING…QPTTHPPHHN (70 aa)) is disordered. The Nuclear localization signal motif lies at 92 to 99 (VKRASDKK). Tyrosine 132 is subject to Sulfotyrosine. Proline 140 carries the post-translational modification Hydroxyproline.

This sequence belongs to the RGF family. As to quaternary structure, binds to LRR receptor-like serine/threonine-protein kinases RGI1, RGI2 and RGI3 to trigger their dimerization with SERK proteins and subsequent signaling. In terms of processing, the tyrosine sulfation is critical for the function of the peptide. As to expression, expressed in root tips.

The protein localises to the secreted. Its subcellular location is the nucleus. Functionally, maintains the postembryonic root stem cell niche by regulating the expression levels and patterns of the transcription factor PLETHORA (PLT), mainly at the post-transcriptional level. Promotes root elongation. This Arabidopsis thaliana (Mouse-ear cress) protein is Root meristem growth factor 10.